The chain runs to 361 residues: Putative geranylgeranyl pyrophosphate synthase 8, chloroplastic (361 aa).

A chloroplast-targeting transit peptide spans M1–S39. Residues I24–N58 are disordered. Polar residues predominate over residues L36–G46. K107, R110, and H139 together coordinate isopentenyl diphosphate. Mg(2+) is bound by residues D146 and D152. Position 157 (R157) interacts with dimethylallyl diphosphate. R158 is an isopentenyl diphosphate binding site. 5 residues coordinate dimethylallyl diphosphate: K246, T247, Q284, K301, and K311.

This sequence belongs to the FPP/GGPP synthase family. Monomer. It depends on Mg(2+) as a cofactor.

It localises to the plastid. It is found in the chloroplast. It carries out the reaction isopentenyl diphosphate + dimethylallyl diphosphate = (2E)-geranyl diphosphate + diphosphate. It catalyses the reaction isopentenyl diphosphate + (2E)-geranyl diphosphate = (2E,6E)-farnesyl diphosphate + diphosphate. The catalysed reaction is isopentenyl diphosphate + (2E,6E)-farnesyl diphosphate = (2E,6E,10E)-geranylgeranyl diphosphate + diphosphate. It participates in isoprenoid biosynthesis; farnesyl diphosphate biosynthesis; farnesyl diphosphate from geranyl diphosphate and isopentenyl diphosphate: step 1/1. The protein operates within isoprenoid biosynthesis; geranyl diphosphate biosynthesis; geranyl diphosphate from dimethylallyl diphosphate and isopentenyl diphosphate: step 1/1. Its pathway is isoprenoid biosynthesis; geranylgeranyl diphosphate biosynthesis; geranylgeranyl diphosphate from farnesyl diphosphate and isopentenyl diphosphate: step 1/1. Catalyzes the trans-addition of the three molecules of IPP onto DMAPP to form geranylgeranyl pyrophosphate. In Arabidopsis thaliana (Mouse-ear cress), this protein is Putative geranylgeranyl pyrophosphate synthase 8, chloroplastic.